Here is a 349-residue protein sequence, read N- to C-terminus: Insulin gene enhancer protein ISL-1 (349 aa).

2 LIM zinc-binding domains span residues 17-70 (CVGC…CKRD) and 79-133 (CAKC…RADH). The homeobox DNA-binding region spans 181–240 (TTRVRTVLNEKQLHTLRTCYAANPRPDALMKEQLVEMTGLSPRVIRVWFQNKRCKDKKRS). The tract at residues 312–349 (VNFSEGGPGSNSTGSEVASMSSQLPDTPNSMVASPIEA) is disordered. Residues 321–343 (SNSTGSEVASMSSQLPDTPNSMV) are compositionally biased toward polar residues.

The protein localises to the nucleus. Functionally, acts as a transcriptional regulator. Recognizes and binds to the consensus octamer binding site 5'-ATAATTAA-3' in promoter of target genes. Plays a fundamental role in the gene regulatory network essential for retinal ganglion cell (RGC) differentiation. Binds to insulin gene enhancer sequences. Defines subclasses of motoneurons that segregate into columns in the spinal cord and select distinct axon pathways. Acts in conjunction with LHX1, LHX3 and ISL2. Binds to insulin gene enhancer sequences. Essential for heart development. This is Insulin gene enhancer protein ISL-1 (ISL1) from Gallus gallus (Chicken).